An 837-amino-acid polypeptide reads, in one-letter code: CoA-transferase/lyase DddD (837 aa).

Asp-602 serves as the catalytic Nucleophile.

Belongs to the CoA-transferase III family.

Functionally, dimethyl sulfide (DMS)-producing enzyme. Acts both as a transferase and a lyase: uses acetyl-coenzyme A (acetyl-coA) and dimethylsulfoniopropionate (DMSP) as substrates to produce DMS, acetate and 3-hydroxypropionate-CoA (3HP-CoA). Mediates the CoA-transferase prior to lyase activity. DMS is the principal form by which sulfur is transported from oceans to the atmosphere and is a key component of the ocean sulfur cycle. This is CoA-transferase/lyase DddD from Marinomonas sp. (strain MWYL1).